Here is a 708-residue protein sequence, read N- to C-terminus: G-box-binding factor (708 aa).

Disordered regions lie at residues 1 to 29 and 123 to 339; these read MLST…GSDL and QQAQ…QTIP. Composition is skewed to low complexity over residues 11 to 21, 123 to 219, and 227 to 316; these read SSSSSSSSSPS, QQAQ…QHHQ, and SQPQ…SPST. Over residues 324–333 the composition is skewed to basic and acidic residues; sequence ETSNSEKKDS. Tandem repeats lie at residues 339 to 368 and 481 to 510. Residues 511-604 are disordered; that stretch reads VGAGLSPSSS…PTYSPNPSLP (94 aa). Residues 516 to 590 show a composition bias toward low complexity; that stretch reads SPSSSPSSPK…SSISQSPLQL (75 aa). Positions 591-600 are enriched in polar residues; sequence NYQTPTYSPN.

Its subcellular location is the nucleus. Functionally, cAMP-responsive transcriptional activator regulating late gene expression. Essential component of the developmental switch between early and late development. Binds to a number of CA/GT-rich gene regulatory elements. This is G-box-binding factor (gbfA) from Dictyostelium discoideum (Social amoeba).